Reading from the N-terminus, the 151-residue chain is Small ribosomal subunit protein uS15 (151 aa).

Positions 1–20 are disordered; the sequence is MARLHSGKRGSSGSTRPLRT.

Belongs to the universal ribosomal protein uS15 family. As to quaternary structure, part of the 30S ribosomal subunit.

This is Small ribosomal subunit protein uS15 from Methanococcus maripaludis (strain C5 / ATCC BAA-1333).